A 471-amino-acid polypeptide reads, in one-letter code: Glutamate--tRNA ligase 1 (471 aa).

Residues P10–G20 carry the 'HIGH' region motif. The Zn(2+) site is built by C99, C101, C126, and D128. Residues R238–R242 carry the 'KMSKS' region motif. Position 241 (K241) interacts with ATP.

The protein belongs to the class-I aminoacyl-tRNA synthetase family. Glutamate--tRNA ligase type 1 subfamily. In terms of assembly, monomer. It depends on Zn(2+) as a cofactor.

The protein resides in the cytoplasm. The enzyme catalyses tRNA(Glu) + L-glutamate + ATP = L-glutamyl-tRNA(Glu) + AMP + diphosphate. Catalyzes the attachment of glutamate to tRNA(Glu) in a two-step reaction: glutamate is first activated by ATP to form Glu-AMP and then transferred to the acceptor end of tRNA(Glu). The chain is Glutamate--tRNA ligase 1 from Alkalilimnicola ehrlichii (strain ATCC BAA-1101 / DSM 17681 / MLHE-1).